Here is a 155-residue protein sequence, read N- to C-terminus: Cyanate hydratase (155 aa).

Residues Arg-95, Glu-98, and Ser-121 contribute to the active site.

The protein belongs to the cyanase family.

The catalysed reaction is cyanate + hydrogencarbonate + 3 H(+) = NH4(+) + 2 CO2. Its function is as follows. Catalyzes the reaction of cyanate with bicarbonate to produce ammonia and carbon dioxide. The protein is Cyanate hydratase of Pseudomonas savastanoi pv. phaseolicola (strain 1448A / Race 6) (Pseudomonas syringae pv. phaseolicola (strain 1448A / Race 6)).